The chain runs to 532 residues: MTSGRVNPQFRLEDQGIEGLGNVYYNFMEPALIEAALKRGEGTLGNGGAFLVTTGKFTGRSPKDKHVVKTASVADSIWWDNNAAMTPEGFDALYDDMLAHMKGKDYFVQDLVGGADPAYSINVRMVTELAWHNLFIRHLLRRPAREDLNEFVADFTVINCPSFQADPAKHGCRSETVIAMNFDRKLILIGGTEYAGENKKSVFTLLNYMLPEKGVMPMHCSANHAVGNPVDTAVFFGLSGTGKTTLSADPARVLIGDDEHGWSDRGTFNFEGGCYAKTINLNPEAEPEIYATTTKFATVIENMVFDEETKELDFDDDSLTANMRCAYPLEYISNASVSALGGHPKNIIMLTCDAFGVLPPIARLTPAQAMYHFLSGFTSKVAGTERGVTEPQPTFSTCFGAPFMPRRPEVYGNLLRDKIARHGATCWLVNTGWTGGAYGVGSRMPIKATRALLTAALNGSLNNAEFRKDGNFGFDVPVSVPGVAEVLLDPRRTWDDQGAFDKQAAKLVQMFADNFEQYVPYIDEDVKAVAIG.

Residues Arg-60, Tyr-194, and Lys-200 each contribute to the substrate site. Residues Lys-200, His-219, and 237-245 contribute to the ATP site; that span reads GLSGTGKTT. Mn(2+)-binding residues include Lys-200 and His-219. Asp-258 is a Mn(2+) binding site. ATP contacts are provided by Glu-286, Arg-324, and Thr-449. Arg-324 contributes to the substrate binding site.

Belongs to the phosphoenolpyruvate carboxykinase (ATP) family. The cofactor is Mn(2+).

It is found in the cytoplasm. It catalyses the reaction oxaloacetate + ATP = phosphoenolpyruvate + ADP + CO2. Its pathway is carbohydrate biosynthesis; gluconeogenesis. In terms of biological role, involved in the gluconeogenesis. Catalyzes the conversion of oxaloacetate (OAA) to phosphoenolpyruvate (PEP) through direct phosphoryl transfer between the nucleoside triphosphate and OAA. The polypeptide is Phosphoenolpyruvate carboxykinase (ATP) (Ruegeria pomeroyi (strain ATCC 700808 / DSM 15171 / DSS-3) (Silicibacter pomeroyi)).